A 348-amino-acid polypeptide reads, in one-letter code: Ricin B-like lectin R40C1 (348 aa).

A disordered region spans residues 1–26 (MFGFGHHGHHGQDQPPQHHGGGGGGA). The 147-residue stretch at 199–345 (TVRIFCKADE…CEGDNQRWKI (147 aa)) folds into the Ricin B-type lectin domain.

Expressed in roots and shoots.

In terms of biological role, lectin which binds carbohydrates in vitro. Interacts through its lectin domain with glycan structures containing specific motifs. The chain is Ricin B-like lectin R40C1 from Oryza sativa subsp. japonica (Rice).